The following is a 368-amino-acid chain: Alcohol dehydrogenase 6 (368 aa).

S23 is subject to Phosphoserine. C47, H69, C99, C102, C105, C113, and C175 together coordinate Zn(2+). Residues 200–205, D224, K229, and 293–295 contribute to the NAD(+) site; these read GLGGVG and VGV.

This sequence belongs to the zinc-containing alcohol dehydrogenase family. Class-V subfamily. In terms of assembly, dimer. Zn(2+) serves as cofactor. As to expression, stomach and liver.

The protein localises to the cytoplasm. The enzyme catalyses a primary alcohol + NAD(+) = an aldehyde + NADH + H(+). It catalyses the reaction a secondary alcohol + NAD(+) = a ketone + NADH + H(+). Its activity is regulated as follows. Inhibited partially by pyrazole (10 mM) in the reaction mixture containing 100 mM ethanol at pH 10.0. Its function is as follows. Alcohol dehydrogenase. Catalyzes the NAD-dependent oxidation of primary alcohols to the corresponding aldehydes. Oxidizes secondary alcohols to the corresponding ketones. This is Alcohol dehydrogenase 6 (ADH6) from Homo sapiens (Human).